The primary structure comprises 295 residues: Ent-pimara-9(11),15-diene synthase (295 aa).

Belongs to the terpene synthase family. Monomer. A divalent metal cation is required as a cofactor.

The catalysed reaction is ent-copalyl diphosphate = ent-pimara-9(11),15-diene + diphosphate. It participates in antibiotic biosynthesis. Its function is as follows. Involved in viguiepinol biosynthesis. Catalyzes the conversion of copalyl diphosphate (ent-CDP) into pimara-9(11),15-diene (PMD). The chain is Ent-pimara-9(11),15-diene synthase from Streptomyces sp. (strain KO-3988).